The following is a 45-amino-acid chain: MTKRTFGGTSRKRKRVSGFRVRMRSHTGRRVIKSRRQKGRERIAV.

The disordered stretch occupies residues 1–45 (MTKRTFGGTSRKRKRVSGFRVRMRSHTGRRVIKSRRQKGRERIAV). Basic residues predominate over residues 10–39 (SRKRKRVSGFRVRMRSHTGRRVIKSRRQKG).

This sequence belongs to the bacterial ribosomal protein bL34 family.

This Prochlorococcus marinus (strain MIT 9301) protein is Large ribosomal subunit protein bL34.